The sequence spans 118 residues: Large ribosomal subunit protein bL20 (118 aa).

Belongs to the bacterial ribosomal protein bL20 family.

Binds directly to 23S ribosomal RNA and is necessary for the in vitro assembly process of the 50S ribosomal subunit. It is not involved in the protein synthesizing functions of that subunit. The protein is Large ribosomal subunit protein bL20 of Caulobacter vibrioides (strain ATCC 19089 / CIP 103742 / CB 15) (Caulobacter crescentus).